The chain runs to 202 residues: Hydrogenase expression/formation protein HupD (202 aa).

Positions 28, 74, and 105 each coordinate Ni(2+).

The protein belongs to the peptidase A31 family.

In terms of biological role, not known. Could be involved in the processing of hydrogenase. The protein is Hydrogenase expression/formation protein HupD (hupD) of Rhizobium leguminosarum bv. viciae.